A 243-amino-acid chain; its full sequence is Terpene cyclase dpasB (243 aa).

7 consecutive transmembrane segments (helical) span residues 16–36 (VVWV…SNYI), 50–70 (MALM…FIYP), 79–99 (IHTL…RYGA), 112–132 (LPVI…AFAE), 141–161 (AVSG…QLLC), 172–189 (LWLA…PNML), and 207–227 (IWFL…LWYV).

This sequence belongs to the paxB family.

The protein localises to the membrane. The protein operates within secondary metabolite biosynthesis; terpenoid biosynthesis. Its function is as follows. Terpene cyclase; part of the gene cluster that mediates the biosynthesis of the diterpenoid pyrones subglutinols A and B. The first step of the pathway is the synthesis of the alpha-pyrone moiety by the polyketide synthase dpasA via condensation of one acetyl-CoA starter unit with 3 malonyl-CoA units and 2 methylations. The alpha-pyrone is then combined with geranylgeranyl pyrophosphate (GGPP) formed by the GGPP synthase dpasD through the action of the prenyltransferase dpasC to yield a linear alpha-pyrone diterpenoid. Subsequent steps in the diterpenoid pyrone biosynthetic pathway involve the decalin core formation, which is initiated by the epoxidation of the C10-C11 olefin by the FAD-dependent oxidoreductase dpasE, and is followed by a cyclization cascade catalyzed by the terpene cyclase dpasB. The FAD-linked oxidoreductase dpasF is then involved in tetrahydrofuran (THF) ring formation at the C5 unit to complete the formation of subglutinols A and B. DpasF possesses also an additional catalytic ability of multi-step oxidations to generate a new DDP analog with an enone system at the C5 named FDDP A. The sequence is that of Terpene cyclase dpasB from Apiospora sacchari (Arthrinium sacchari).